A 131-amino-acid polypeptide reads, in one-letter code: Monothiol glutaredoxin-S6 (131 aa).

The Glutaredoxin domain maps to 31 to 131 (SAFVQNAIYS…KLLGNSQSQR (101 aa)). C51 provides a ligand contact to [2Fe-2S] cluster.

Belongs to the glutaredoxin family. CPYC subfamily.

The protein localises to the cytoplasm. Its function is as follows. May only reduce GSH-thiol disulfides, but not protein disulfides. The sequence is that of Monothiol glutaredoxin-S6 (GRXS6) from Oryza sativa subsp. japonica (Rice).